A 784-amino-acid chain; its full sequence is Probable phosphoketolase (784 aa).

This sequence belongs to the XFP family. Requires thiamine diphosphate as cofactor.

This is Probable phosphoketolase from Rhodopseudomonas palustris (strain BisB5).